A 110-amino-acid chain; its full sequence is uncharacterized protein (110 aa).

2 helical membrane passes run 21 to 41 (IQLA…PQIC) and 63 to 83 (PSMI…IIVV).

The protein resides in the membrane. This is an uncharacterized protein from Saccharomyces cerevisiae (strain ATCC 204508 / S288c) (Baker's yeast).